Consider the following 60-residue polypeptide: Large ribosomal subunit protein uL30 (60 aa).

The protein belongs to the universal ribosomal protein uL30 family. As to quaternary structure, part of the 50S ribosomal subunit.

The chain is Large ribosomal subunit protein uL30 from Leuconostoc mesenteroides subsp. mesenteroides (strain ATCC 8293 / DSM 20343 / BCRC 11652 / CCM 1803 / JCM 6124 / NCDO 523 / NBRC 100496 / NCIMB 8023 / NCTC 12954 / NRRL B-1118 / 37Y).